A 188-amino-acid chain; its full sequence is Antitoxin SocA (188 aa).

In terms of assembly, interacts with cognate toxin SocB and with ClpX.

In terms of biological role, antitoxin component of an atypical type II toxin-antitoxin (TA) system. Unlike most type II TA systems, neutralizes the toxic activity of cognate toxin SocB by acting as an adapter to promote its degradation by ClpXP; degradation is dependent on the N-terminus of ClpX. This is Antitoxin SocA from Caulobacter vibrioides (strain NA1000 / CB15N) (Caulobacter crescentus).